The following is a 259-amino-acid chain: Phosphatidylglycerol--prolipoprotein diacylglyceryl transferase (259 aa).

The next 4 membrane-spanning stretches (helical) occupy residues 10 to 30 (IGLL…LFAY), 50 to 70 (IISW…ILFY), 86 to 106 (WKGG…MYIF), and 112 to 132 (IKFL…IFLG). Arg133 lines the a 1,2-diacyl-sn-glycero-3-phospho-(1'-sn-glycerol) pocket. 3 helical membrane-spanning segments follow: residues 169-189 (LYEA…LFFF), 197-217 (GMLF…IEFV), and 227-247 (ILFN…ILGI).

This sequence belongs to the Lgt family.

It is found in the cell inner membrane. It carries out the reaction L-cysteinyl-[prolipoprotein] + a 1,2-diacyl-sn-glycero-3-phospho-(1'-sn-glycerol) = an S-1,2-diacyl-sn-glyceryl-L-cysteinyl-[prolipoprotein] + sn-glycerol 1-phosphate + H(+). It functions in the pathway protein modification; lipoprotein biosynthesis (diacylglyceryl transfer). Functionally, catalyzes the transfer of the diacylglyceryl group from phosphatidylglycerol to the sulfhydryl group of the N-terminal cysteine of a prolipoprotein, the first step in the formation of mature lipoproteins. In Ehrlichia ruminantium (strain Gardel), this protein is Phosphatidylglycerol--prolipoprotein diacylglyceryl transferase.